The primary structure comprises 418 residues: Serine hydroxymethyltransferase (418 aa).

Residues leucine 121 and 125-127 contribute to the (6S)-5,6,7,8-tetrahydrofolate site; that span reads GHL. Residue lysine 230 is modified to N6-(pyridoxal phosphate)lysine. 356 to 358 serves as a coordination point for (6S)-5,6,7,8-tetrahydrofolate; it reads SPF.

This sequence belongs to the SHMT family. Homodimer. Pyridoxal 5'-phosphate is required as a cofactor.

The protein localises to the cytoplasm. The catalysed reaction is (6R)-5,10-methylene-5,6,7,8-tetrahydrofolate + glycine + H2O = (6S)-5,6,7,8-tetrahydrofolate + L-serine. It functions in the pathway one-carbon metabolism; tetrahydrofolate interconversion. Its pathway is amino-acid biosynthesis; glycine biosynthesis; glycine from L-serine: step 1/1. Its function is as follows. Catalyzes the reversible interconversion of serine and glycine with tetrahydrofolate (THF) serving as the one-carbon carrier. This reaction serves as the major source of one-carbon groups required for the biosynthesis of purines, thymidylate, methionine, and other important biomolecules. Also exhibits THF-independent aldolase activity toward beta-hydroxyamino acids, producing glycine and aldehydes, via a retro-aldol mechanism. This is Serine hydroxymethyltransferase from Shewanella sediminis (strain HAW-EB3).